We begin with the raw amino-acid sequence, 359 residues long: Probable deacetylase AF_0130 (359 aa).

His126 acts as the Proton donor/acceptor in catalysis. Asp162, His164, and Asp249 together coordinate Zn(2+).

It belongs to the histone deacetylase family. It depends on Zn(2+) as a cofactor.

Its function is as follows. Probable deacetylase. The chain is Probable deacetylase AF_0130 from Archaeoglobus fulgidus (strain ATCC 49558 / DSM 4304 / JCM 9628 / NBRC 100126 / VC-16).